A 428-amino-acid chain; its full sequence is Serine--tRNA ligase (428 aa).

235–237 (TAE) is an L-serine binding site. 266–268 (RSE) contacts ATP. Glutamate 289 provides a ligand contact to L-serine. Residue 353 to 356 (EISS) coordinates ATP. Serine 389 contacts L-serine.

This sequence belongs to the class-II aminoacyl-tRNA synthetase family. Type-1 seryl-tRNA synthetase subfamily. Homodimer. The tRNA molecule binds across the dimer.

It is found in the cytoplasm. The enzyme catalyses tRNA(Ser) + L-serine + ATP = L-seryl-tRNA(Ser) + AMP + diphosphate + H(+). It carries out the reaction tRNA(Sec) + L-serine + ATP = L-seryl-tRNA(Sec) + AMP + diphosphate + H(+). It functions in the pathway aminoacyl-tRNA biosynthesis; selenocysteinyl-tRNA(Sec) biosynthesis; L-seryl-tRNA(Sec) from L-serine and tRNA(Sec): step 1/1. Its function is as follows. Catalyzes the attachment of serine to tRNA(Ser). Is also able to aminoacylate tRNA(Sec) with serine, to form the misacylated tRNA L-seryl-tRNA(Sec), which will be further converted into selenocysteinyl-tRNA(Sec). This is Serine--tRNA ligase from Shewanella amazonensis (strain ATCC BAA-1098 / SB2B).